The chain runs to 407 residues: Proteasome-activating nucleotidase (407 aa).

The stretch at 22–67 forms a coiled coil; it reads KEKAYLAELESKVLRLELKNKDITRENVQIKKENEILKRELDKLRI. ATP is bound by residues 192 to 197 and His331; that span reads GTGKTL. The tract at residues 405–407 is docks into pockets in the proteasome alpha-ring to cause gate opening; the sequence is MYG.

It belongs to the AAA ATPase family. In terms of assembly, homohexamer. The hexameric complex has a two-ring architecture resembling a top hat that caps the 20S proteasome core at one or both ends. Upon ATP-binding, the C-terminus of PAN interacts with the alpha-rings of the proteasome core by binding to the intersubunit pockets.

It is found in the cytoplasm. In terms of biological role, ATPase which is responsible for recognizing, binding, unfolding and translocation of substrate proteins into the archaeal 20S proteasome core particle. Is essential for opening the gate of the 20S proteasome via an interaction with its C-terminus, thereby allowing substrate entry and access to the site of proteolysis. Thus, the C-termini of the proteasomal ATPase function like a 'key in a lock' to induce gate opening and therefore regulate proteolysis. Unfolding activity requires energy from ATP hydrolysis, whereas ATP binding alone promotes ATPase-20S proteasome association which triggers gate opening, and supports translocation of unfolded substrates. This chain is Proteasome-activating nucleotidase, found in Methanococcus vannielii (strain ATCC 35089 / DSM 1224 / JCM 13029 / OCM 148 / SB).